The following is a 580-amino-acid chain: Cis-3-hydroxy-L-proline dehydratase (580 aa).

Serine 66 (proton acceptor) is an active-site residue.

The protein belongs to the AcnX family. In terms of assembly, monomer. Fe(3+) is required as a cofactor.

The catalysed reaction is cis-3-hydroxy-L-proline = 1-pyrroline-2-carboxylate + H2O. Inhibited by Zn(2+), Cd(2+) and Hg(2+), but not by Co(2+), Ni(2+), Mn(2+), Sr(2+), Mg(2+), or Fe(3+). Inhibited by pyrrole-2-carboxylate and its derivative 2-thiophenecarboxylate, but not by trans-aconitate, fluorocitrate and oxalomalate, which are typical inhibitors of the aconitase enzymes. Functionally, catalyzes the dehydration of cis-3-hydroxy-L-proline (c3LHyp) to Delta(1)-pyrroline-2-carboxylate (Pyr2C). Also has activity with (2S,3S,4R)-3,4-dihydroxyproline as substrate, albeit at about 300-fold lower rate. No activity with L-proline, trans-4-hydroxy-L-proline (t4LHyp), cis-4-hydroxy-L-proline (c4LHyp), trans-3-hydroxy-L-proline (t3LHyp), D-proline, cis-4-hydroxy-D-proline (c4DHyp), trans-4-hydroxy-D-proline (t4DHyp) or L-serine as substrates. No hydro-lyase activity with citrate or cis-acotinate. Does not catalyze 2-epimerization of c3LHyp to trans-3-hydroxy-D-proline (t3DHyp). Involved in a degradation pathway that converts c3LHyp to L-proline, which would allow P.aeruginosa to grow on c3LHyp as a sole carbon source. This chain is Cis-3-hydroxy-L-proline dehydratase, found in Pseudomonas aeruginosa (strain ATCC 15692 / DSM 22644 / CIP 104116 / JCM 14847 / LMG 12228 / 1C / PRS 101 / PAO1).